A 375-amino-acid chain; its full sequence is Aminomethyltransferase (375 aa).

It belongs to the GcvT family. The glycine cleavage system is composed of four proteins: P, T, L and H.

The catalysed reaction is N(6)-[(R)-S(8)-aminomethyldihydrolipoyl]-L-lysyl-[protein] + (6S)-5,6,7,8-tetrahydrofolate = N(6)-[(R)-dihydrolipoyl]-L-lysyl-[protein] + (6R)-5,10-methylene-5,6,7,8-tetrahydrofolate + NH4(+). Its function is as follows. The glycine cleavage system catalyzes the degradation of glycine. This is Aminomethyltransferase from Symbiobacterium thermophilum (strain DSM 24528 / JCM 14929 / IAM 14863 / T).